The primary structure comprises 278 residues: Large ribosomal subunit protein uL2 (278 aa).

The disordered stretch occupies residues 208-278 (AGRSRWMGKR…LIIRHRKGRK (71 aa)). Basic residues predominate over residues 209–219 (GRSRWMGKRPQ). Residues 258–270 (KTRDSKKASEKLI) are compositionally biased toward basic and acidic residues.

Belongs to the universal ribosomal protein uL2 family. In terms of assembly, part of the 50S ribosomal subunit. Forms a bridge to the 30S subunit in the 70S ribosome.

Its function is as follows. One of the primary rRNA binding proteins. Required for association of the 30S and 50S subunits to form the 70S ribosome, for tRNA binding and peptide bond formation. It has been suggested to have peptidyltransferase activity; this is somewhat controversial. Makes several contacts with the 16S rRNA in the 70S ribosome. The sequence is that of Large ribosomal subunit protein uL2 from Lactobacillus delbrueckii subsp. bulgaricus (strain ATCC 11842 / DSM 20081 / BCRC 10696 / JCM 1002 / NBRC 13953 / NCIMB 11778 / NCTC 12712 / WDCM 00102 / Lb 14).